The sequence spans 135 residues: Surface presentation of antigens protein SpaK (135 aa).

The protein belongs to the SpaK family.

Functionally, involved in a secretory pathway responsible for the surface presentation of determinants needed for the entry of Salmonella species into mammalian cells. The chain is Surface presentation of antigens protein SpaK (spaK) from Salmonella typhi.